Here is a 251-residue protein sequence, read N- to C-terminus: 1-(5-phosphoribosyl)-5-[(5-phosphoribosylamino)methylideneamino] imidazole-4-carboxamide isomerase (251 aa).

The active-site Proton acceptor is the Asp-8. The active-site Proton donor is Asp-131.

Belongs to the HisA/HisF family.

Its subcellular location is the cytoplasm. The catalysed reaction is 1-(5-phospho-beta-D-ribosyl)-5-[(5-phospho-beta-D-ribosylamino)methylideneamino]imidazole-4-carboxamide = 5-[(5-phospho-1-deoxy-D-ribulos-1-ylimino)methylamino]-1-(5-phospho-beta-D-ribosyl)imidazole-4-carboxamide. It functions in the pathway amino-acid biosynthesis; L-histidine biosynthesis; L-histidine from 5-phospho-alpha-D-ribose 1-diphosphate: step 4/9. This chain is 1-(5-phosphoribosyl)-5-[(5-phosphoribosylamino)methylideneamino] imidazole-4-carboxamide isomerase, found in Burkholderia vietnamiensis (strain G4 / LMG 22486) (Burkholderia cepacia (strain R1808)).